A 691-amino-acid polypeptide reads, in one-letter code: Histone-lysine N-methyltransferase Set8 (691 aa).

Disordered regions lie at residues 1–22 (MIMV…AAAA), 211–234 (RSGL…SATT), 345–381 (PAAG…GDGG), 422–450 (SRRR…QPTN), and 484–516 (APAK…ATNG). Residues 220-232 (SSHSSSSSGGASA) show a composition bias toward low complexity. Residues 431-446 (PQAPYQPQQPQPPPGT) are compositionally biased toward pro residues. The span at 484-503 (APAKPRAALTKGSKTKTGSK) shows a compositional bias: low complexity. One can recognise an SET domain in the interval 555–676 (EGLQVRNFMG…PGEELTYDYG (122 aa)). S-adenosyl-L-methionine is bound by residues 565 to 567 (KGR), Tyr610, and 637 to 638 (NH).

It belongs to the class V-like SAM-binding methyltransferase superfamily. Histone-lysine methyltransferase family. PR/SET subfamily.

It is found in the nucleus. The protein localises to the chromosome. The enzyme catalyses L-lysyl(20)-[histone H4] + S-adenosyl-L-methionine = N(6)-methyl-L-lysyl(20)-[histone H4] + S-adenosyl-L-homocysteine + H(+). Histone methyltransferase that specifically monomethylates 'Lys-20' of histone H4. H4 'Lys-20' monomethylation is enriched during mitosis and represents a specific tag for epigenetic transcriptional repression. Mainly functions in euchromatin regions, thereby playing a central role in the silencing of euchromatic genes. Required for cell proliferation, possibly by contributing to the maintenance of proper higher-order structure of DNA and chromosome condensation during mitosis. This chain is Histone-lysine N-methyltransferase Set8, found in Drosophila pseudoobscura pseudoobscura (Fruit fly).